The following is a 166-amino-acid chain: Lipoprotein signal peptidase (166 aa).

The next 3 helical transmembrane spans lie at 12–32 (WLWVVVAVLIIDLGSKFLILQ), 70–90 (WFFSGIAIGICVVLTVLMYRS), and 102–122 (ALIIGGALGNLFDRLWHGFVV). Residues aspartate 123 and aspartate 141 contribute to the active site. The chain crosses the membrane as a helical span at residues 137–157 (FNLADSAICIGAALIVLEGFL).

This sequence belongs to the peptidase A8 family.

It localises to the cell inner membrane. It catalyses the reaction Release of signal peptides from bacterial membrane prolipoproteins. Hydrolyzes -Xaa-Yaa-Zaa-|-(S,diacylglyceryl)Cys-, in which Xaa is hydrophobic (preferably Leu), and Yaa (Ala or Ser) and Zaa (Gly or Ala) have small, neutral side chains.. It participates in protein modification; lipoprotein biosynthesis (signal peptide cleavage). Its function is as follows. This protein specifically catalyzes the removal of signal peptides from prolipoproteins. This Klebsiella pneumoniae (strain 342) protein is Lipoprotein signal peptidase.